The following is a 365-amino-acid chain: Baculoviral IAP repeat-containing protein 7 (365 aa).

BIR repeat units lie at residues 7–73 (RQRS…PFLQ) and 115–180 (RLGS…DFLL). Residues Cys-149, Cys-152, His-169, and Cys-176 each coordinate Zn(2+). Positions 186-234 (AFIRSVQESFFSSPETSPESVGSYEGSPVSSPGSPPVCPFLSTSVAQGA) are self-inhibits the anti-apoptotic function. At Ser-198 the chain carries Phosphoserine. The residue at position 202 (Ser-202) is a Phosphoserine; by MAPK1. At Ser-212 the chain carries Phosphoserine. Ser-216 and Ser-219 each carry phosphoserine; by MAPK1. The segment at 278–306 (TESVSVPRAPTQRERPEPPKEPAPPLSTE) is disordered. Basic and acidic residues predominate over residues 288–297 (TQRERPEPPK). The segment at 318–353 (CKVCMDNDVSMVFVPCGHLVVCTECAPNLRHCPICR) adopts an RING-type zinc-finger fold.

Belongs to the IAP family. Post-translationally, auto-ubiquitinated, and degraded in a 2-step mechanism; a caspase-independent first step and a caspase-dependent second step. In terms of processing, phosphorylated via MAPK-dependent and CDK-dependent pathways during oocyte maturation. Phosphorylation does not appear to affect caspase inhibition or autoubiquitination activity.

Its subcellular location is the cytoplasm. It catalyses the reaction S-ubiquitinyl-[E2 ubiquitin-conjugating enzyme]-L-cysteine + [acceptor protein]-L-lysine = [E2 ubiquitin-conjugating enzyme]-L-cysteine + N(6)-ubiquitinyl-[acceptor protein]-L-lysine.. Weak apoptotic suppressor. Has E3 ubiquitin-protein ligase activity. Weak inhibitor of caspase activity. The polypeptide is Baculoviral IAP repeat-containing protein 7 (birc7) (Xenopus tropicalis (Western clawed frog)).